Reading from the N-terminus, the 349-residue chain is Protein AMBP (349 aa).

The N-terminal stretch at 1 to 19 is a signal peptide; it reads MQGLGALFLLLTACLTLKA. 3-hydroxy-L-kynurenine contacts are provided by Cys52 and Lys110. A disulfide bond links Cys90 and Cys187. Asn114 carries an N-linked (GlcNAc...) asparagine glycan. 3-hydroxy-L-kynurenine is bound by residues Lys136 and Lys148. A glycan (O-linked (Xyl...) (chondroitin sulfate) serine) is linked at Ser214. Intrachain disulfides connect Cys230–Cys280, Cys239–Cys263, Cys255–Cys276, Cys286–Cys336, Cys295–Cys319, and Cys311–Cys332. 2 BPTI/Kunitz inhibitor domains span residues 230-280 and 286-336; these read CQLN…LQTC and CNLP…KEYC. Asn233 carries N-linked (GlcNAc...) asparagine glycosylation.

The protein in the N-terminal section; belongs to the calycin superfamily. Lipocalin family. In terms of assembly, monomer. Homodimer. In plasma, it occurs as a monomer or dimer and in covalently-linked complexes with immunoglobulin A (IgA), ALB/albumin and F2/prothrombin. Chromophore-bound alpha-1-microglobulin interacts with the constant region of immunoglobulin A. Chromophore-bound alpha-1-microglobulin interacts with ALB with molar ratio 2:1 and 1:1; this interaction does not prevent fatty acid binding to ALB. Interacts with F2/prothrombin (via N-terminus) with molar ratio 2:1 and 1:1; this interaction does not prevent the activation of prothrombin to thrombin. Interacts with NDUFAB1, a subunit of mitochondrial complex I. Interacts with FN1. As to quaternary structure, I-alpha-I plasma protease inhibitors are assembled from one or two heavy chains (HC) and one light chain, bikunin. Inter-alpha-inhibitor (I-alpha-I) is composed of ITIH1/HC1, ITIH2/HC2 and bikunin, and pre-alpha-inhibitor (P-alpha-I) of ITIH3/HC3 and bikunin. Interacts with TNFAIP6 (via Link domain). Monomer. Also occurs as a complex with tryptase in mast cells. In terms of processing, the precursor is proteolytically processed into separately functioning proteins. Post-translationally, 3-hydroxykynurenine, an oxidized tryptophan metabolite that is common in biological fluids, reacts with Cys-53, Lys-111, Lys-137, and Lys-149 to form heterogeneous polycyclic chromophores including hydroxanthommatin. The reaction by alpha-1-microglobulin is autocatalytic; the human protein forms chromophore even when expressed in insect and bacterial cells. The chromophore can react with accessible cysteines forming non-reducible thioether cross-links with other molecules of alpha-1-microglobulin or with other proteins such as Ig alpha-1 chain C region 'Cys-352'. Heavy chains are interlinked with bikunin via a chondroitin 4-sulfate bridge to the C-terminal aspartate. In terms of processing, proteolytically cleaved by PRSS3 at Kunitz domain 2. In terms of tissue distribution, expressed by the liver and secreted in plasma.

It is found in the secreted. It localises to the endoplasmic reticulum. Its subcellular location is the cytoplasm. The protein resides in the cytosol. The protein localises to the cell membrane. It is found in the nucleus membrane. It localises to the mitochondrion inner membrane. Its subcellular location is the extracellular space. The protein resides in the extracellular matrix. Functionally, antioxidant and tissue repair protein with reductase, heme-binding and radical-scavenging activities. Removes and protects against harmful oxidants and repairs macromolecules in intravascular and extravascular spaces and in intracellular compartments. Intravascularly, plays a regulatory role in red cell homeostasis by preventing heme- and reactive oxygen species-induced cell damage. Binds and degrades free heme to protect fetal and adult red blood cells from hemolysis. Reduces extracellular methemoglobin, a Fe3+ (ferric) form of hemoglobin that cannot bind oxygen, back to the Fe2+ (ferrous) form deoxyhemoglobin, which has oxygen-carrying potential. Upon acute inflammation, inhibits oxidation of low-density lipoprotein particles by MPO and limits vascular damage. Extravascularly, protects from oxidation products formed on extracellular matrix structures and cell membranes. Catalyzes the reduction of carbonyl groups on oxidized collagen fibers and preserves cellular and extracellular matrix ultrastructures. Importantly, counteracts the oxidative damage at blood-placenta interface, preventing leakage of free fetal hemoglobin into the maternal circulation. Intracellularly, has a role in maintaining mitochondrial redox homeostasis. Bound to complex I of the respiratory chain of mitochondria, may scavenge free radicals and preserve mitochondrial ATP synthesis. Protects renal tubule epithelial cells from heme-induced oxidative damage to mitochondria. Reduces cytochrome c from Fe3+ (ferric) to the Fe2+ (ferrous) state through formation of superoxide anion radicals in the presence of ascorbate or NADH/NADPH electron donor cofactors, ascorbate being the preferred cofactor. Has a chaperone role in facilitating the correct folding of bikunin in the endoplasmic reticulum compartment. In terms of biological role, kunitz-type serine protease inhibitor and structural component of extracellular matrix with a role in extracellular space remodeling and cell adhesion. Among others, has antiprotease activity toward kallikrein, a protease involved in airway inflammation; inhibits GZMK/granzyme, a granule-stored serine protease involved in NK and T cell cytotoxic responses; and inhibits PLG/plasmin, a protease required for activation of matrix metalloproteinases. As part of I-alpha-I complex, provides for the heavy chains to be transferred from I-alpha-I complex to hyaluronan in the presence of TNFAIP6, in a dynamic process that releases free bikunin and remodels extracellular matrix proteoglycan structures. Free bikunin, but not its heavy chain-bound form, acts as a potent protease inhibitor in airway secretions. Part of hyaluronan-rich extracellular matrix that surrounds oocyte during cumulus oophorus expansion, an indispensable process for proper ovulation. Also inhibits calcium oxalate crystallization. Its function is as follows. Kunitz-type serine protease inhibitor. Has high catalytic efficiency for F10/blood coagulation factor Xa and may act as an anticoagulant by inhibiting prothrombin activation. Inhibits trypsin and mast cell CMA1/chymase and tryptase proteases. This is Protein AMBP (Ambp) from Rattus norvegicus (Rat).